Consider the following 510-residue polypeptide: Histidine ammonia-lyase (510 aa).

Residues alanine 143–glycine 145 constitute a cross-link (5-imidazolinone (Ala-Gly)). At serine 144 the chain carries 2,3-didehydroalanine (Ser).

It belongs to the PAL/histidase family. In terms of processing, contains an active site 4-methylidene-imidazol-5-one (MIO), which is formed autocatalytically by cyclization and dehydration of residues Ala-Ser-Gly.

Its subcellular location is the cytoplasm. It carries out the reaction L-histidine = trans-urocanate + NH4(+). Its pathway is amino-acid degradation; L-histidine degradation into L-glutamate; N-formimidoyl-L-glutamate from L-histidine: step 1/3. This chain is Histidine ammonia-lyase, found in Shewanella sediminis (strain HAW-EB3).